Consider the following 431-residue polypeptide: MAKIINVIGREIMDSRGNPTVEAEVHLEGGFNGMAAAPSGASTGSREALELRDGDKARYLGKGVLTAVANINGPIRDALMGKDATAQAELDQLMIDLDGTENKDKLGANAILAVSLAAAKAAAAFKGMPLYAHIAELNGTPGQFSMPVPMMNILNGGEHADNNVDIQEFMVQPVGAKTFREALRVGAEIFHSLKKVLQEKGLSTSVGDEGGFAPNLASNADALAMIKVAVEKAGYKLGEDVTLALDCAASEFYKDGQYDLTGEGKVFSANGFSDFLKSLTEEYPIASIEDGLDESDWEGWAYQTQIMGDKIQLVGDDLFVTNTKILKRGIDNNIANSILIKFNQIGSLTETLAAIRMAKEAGYTVVISHRSGETEDATIADLAVATSAGQIKTGSLCRSDRVAKYNQLLRIEEQLGEKAPYRGRSEIKGQA.

Glutamine 167 contributes to the (2R)-2-phosphoglycerate binding site. The active-site Proton donor is the glutamate 209. 3 residues coordinate Mg(2+): aspartate 246, glutamate 289, and aspartate 316. Residues lysine 341, arginine 370, serine 371, and lysine 392 each coordinate (2R)-2-phosphoglycerate. The active-site Proton acceptor is the lysine 341.

This sequence belongs to the enolase family. Component of the RNA degradosome, a multiprotein complex involved in RNA processing and mRNA degradation. Mg(2+) serves as cofactor.

It is found in the cytoplasm. The protein resides in the secreted. The protein localises to the cell surface. It catalyses the reaction (2R)-2-phosphoglycerate = phosphoenolpyruvate + H2O. The protein operates within carbohydrate degradation; glycolysis; pyruvate from D-glyceraldehyde 3-phosphate: step 4/5. In terms of biological role, catalyzes the reversible conversion of 2-phosphoglycerate (2-PG) into phosphoenolpyruvate (PEP). It is essential for the degradation of carbohydrates via glycolysis. The protein is Enolase of Shewanella woodyi (strain ATCC 51908 / MS32).